The chain runs to 769 residues: MVTTSSGGGIGYPANNGVTQVSLIHSSDSVRTVSTAPIYRPTSSMASTMAHKSSTAPFISANQRMSKPPVRVVAQPPPPHPQALSQQYHQQNPMMMYSAPNTRPHVIPTMQVQPTMAAQIKRNNPVNAQFQNPSEMIADYGVKPQSVEMVQRVRAVRRQVADEETELRRLRELEHETAQLQNKNYGRERELNVQGSMLKEAQLELRNASMRAQSLNKHLEEMYRRRQTAAAAALVEQRKMQQHQILLARAANQVSTQEVIRPRASVEPFQVNNTQQQQPSPQMMKSEEFSEKRDLNGQTGSYDAIDGSGDHQKIPTEPSYLAPCKENQQKYSELSKMASTDPHSNHSSPSTSSQKAPTLITFSPPSFEQKINSSTMTRDSPFVERPTSFGDSLDESRLRSGKTDLVSLRSDSLKATKRRSWAASEGTSMSEAEMIHRLLDEQRRGRSHFIPQLPTSQEEPSAITSETYAEEVVNSESKQVATSSDSTNNLELPTEQMVLGSDTTTEEDASSCSTRSDDGQNLEMEVAIERRTVKGILRRPNEKMNKGRIEFDPLALLLDAALEGELDLVRSSASKLTDVSQANDEGITALHNAICAGHYEIVRFLIENDADVNAQDSDGWTPLHCAASCNNLPMVRQLVEGGGCVLASTLSDMETPVEKCEEDEDGYDGCLKYLSAAHNSTGSINTGKVYAAYGYEAAFEDELSFDAGDELTVIEKDKVDKNWWTCEKNNGEKGQVPRTYLALYPSLKYRKKLNFVMFDLPLESNNNVE.

Disordered regions lie at residues 69–88 (PVRV…SQQY), 265–396 (SVEP…LDES), and 451–518 (PQLP…RSDD). Over residues 275-284 (QQQQPSPQMM) the composition is skewed to low complexity. Basic and acidic residues predominate over residues 285-295 (KSEEFSEKRDL). A compositionally biased stretch (low complexity) spans 339 to 353 (STDPHSNHSSPSTSS). Composition is skewed to polar residues over residues 354 to 378 (QKAP…TMTR), 453 to 467 (LPTS…TSET), and 474 to 491 (NSES…NNLE). 2 ANK repeats span residues 585–617 (EGIT…AQDS) and 618–652 (DGWT…TLSD). The SH3 domain occupies 684-746 (INTGKVYAAY…PRTYLALYPS (63 aa)).

The protein belongs to the iASPP family. Interacts with cep-1/p53; the interaction inhibits pro-apoptotic activity of cep-1.

It is found in the nucleus. Negetively regulates apoptosis via its interaction with cep-1. This Caenorhabditis elegans protein is Apoptotic enhancer 1 protein.